Here is a 164-residue protein sequence, read N- to C-terminus: Nucleotide-binding protein Acid345_2028 (164 aa).

Belongs to the YajQ family.

Functionally, nucleotide-binding protein. The protein is Nucleotide-binding protein Acid345_2028 of Koribacter versatilis (strain Ellin345).